Here is a 61-residue protein sequence, read N- to C-terminus: Potassium channel toxin alpha-KTx 6.6 (61 aa).

A signal peptide spans 1 to 23 (MNAKFILLLLVVATTMLLPDTQG). Cystine bridges form between Cys-29-Cys-50, Cys-35-Cys-55, Cys-39-Cys-57, and Cys-45-Cys-60. Position 60 is a cysteine amide (Cys-60).

The protein belongs to the short scorpion toxin superfamily. Potassium channel inhibitor family. Alpha-KTx 06 subfamily. Expressed by the venom gland.

The protein localises to the secreted. Blocker of voltage-gated potassium channels. In Opistophthalmus carinatus (African yellow leg scorpion), this protein is Potassium channel toxin alpha-KTx 6.6.